The primary structure comprises 676 residues: Long-chain-fatty-acid--CoA ligase 1 (676 aa).

Tyr-246–Val-257 contacts ATP. The short motif at Asp-511–Leu-560 is the FACS element.

This sequence belongs to the ATP-dependent AMP-binding enzyme family. Requires Mg(2+) as cofactor.

It catalyses the reaction a long-chain fatty acid + ATP + CoA = a long-chain fatty acyl-CoA + AMP + diphosphate. Esterification, concomitant with transport, of exogenous long-chain fatty acids into metabolically active CoA thioesters for subsequent degradation or incorporation into phospholipids. It may supplement intracellular myristoyl-CoA pools from exogenous myristate. Preferentially acts on C12:0-C16:0 fatty acids with myristic and pentadecanic acid (C15:0) having the highest activities. Appears to play a role in the maintenance of cell viability during stationary phase. The sequence is that of Long-chain-fatty-acid--CoA ligase 1 (lcf1) from Schizosaccharomyces pombe (strain 972 / ATCC 24843) (Fission yeast).